Consider the following 978-residue polypeptide: Translation initiation factor IF-2 (978 aa).

Disordered stretches follow at residues 107–129 and 146–387; these read AEAP…NLEL and QEEE…HRVQ. Positions 146-169 are enriched in basic and acidic residues; that stretch reads QEEELSERRRQREEQEARSREASE. Over residues 170–186 the composition is skewed to low complexity; sequence KAAAVAAEAAEAAAAQA. Residues 215 to 259 are compositionally biased toward basic and acidic residues; it reads AEKEQHLAKEKGLAREKELAESKARAAEDVVRAADLGDRRRKAES. Low complexity-rich tracts occupy residues 295–326 and 349–361; these read KPAA…AGAG and PTRG…GAGR. The segment covering 375–386 has biased composition (basic and acidic residues); the sequence is GSSDRDRDDHRV. The tr-type G domain occupies 478–647; sequence PRAPVVTVMG…LLQAEVLELK (170 aa). The G1 stretch occupies residues 487–494; that stretch reads GHVDHGKT. Residue 487-494 coordinates GTP; it reads GHVDHGKT. Residues 512–516 are G2; sequence GITQH. Residues 533–536 form a G3 region; sequence DTPG. GTP is bound by residues 533-537 and 587-590; these read DTPGH and NKID. The tract at residues 587 to 590 is G4; it reads NKID. A G5 region spans residues 623 to 625; the sequence is SAK.

It belongs to the TRAFAC class translation factor GTPase superfamily. Classic translation factor GTPase family. IF-2 subfamily.

It localises to the cytoplasm. Its function is as follows. One of the essential components for the initiation of protein synthesis. Protects formylmethionyl-tRNA from spontaneous hydrolysis and promotes its binding to the 30S ribosomal subunits. Also involved in the hydrolysis of GTP during the formation of the 70S ribosomal complex. The polypeptide is Translation initiation factor IF-2 (Albidiferax ferrireducens (strain ATCC BAA-621 / DSM 15236 / T118) (Rhodoferax ferrireducens)).